The following is a 161-amino-acid chain: Leucine-rich colipase-like protein 1 (161 aa).

An N-terminal signal peptide occupies residues Met-1–Gln-25.

In Mus musculus (Mouse), this protein is Leucine-rich colipase-like protein 1 (Lrcol1).